A 133-amino-acid chain; its full sequence is DNA-binding protein StpA (133 aa).

The segment at 81–115 (AMPRSAKKRQPRPAKYRFTDFNGEEKTWTGQGRTP) is disordered. Positions 85 to 95 (SAKKRQPRPAK) are enriched in basic residues. A DNA-binding region spans residues 111–116 (QGRTPK).

Belongs to the histone-like protein H-NS family. In terms of assembly, forms homodimers, can interact with H-NS.

The protein resides in the cytoplasm. Its subcellular location is the nucleoid. Functionally, a DNA-binding protein that acts in a fashion similar to H-NS, repressing gene transcription. A subset of H-NS/StpA-regulated genes require auxillary proteins for repression; these auxillary proteins (Hha and other similar proteins) may also modulate oligomerization of the H-NS/StpA complex. This chain is DNA-binding protein StpA (stpA), found in Salmonella typhi.